The primary structure comprises 211 residues: Thiamine-phosphate synthase (211 aa).

4-amino-2-methyl-5-(diphosphooxymethyl)pyrimidine-binding positions include Gln-37 to Lys-41 and Asn-69. Asp-70 and Asp-89 together coordinate Mg(2+). Ser-108 lines the 4-amino-2-methyl-5-(diphosphooxymethyl)pyrimidine pocket. Thr-134–Thr-136 is a binding site for 2-[(2R,5Z)-2-carboxy-4-methylthiazol-5(2H)-ylidene]ethyl phosphate. A 4-amino-2-methyl-5-(diphosphooxymethyl)pyrimidine-binding site is contributed by Lys-137. 2-[(2R,5Z)-2-carboxy-4-methylthiazol-5(2H)-ylidene]ethyl phosphate-binding positions include Gly-166 and Val-186–Ser-187.

Belongs to the thiamine-phosphate synthase family. Requires Mg(2+) as cofactor.

The catalysed reaction is 2-[(2R,5Z)-2-carboxy-4-methylthiazol-5(2H)-ylidene]ethyl phosphate + 4-amino-2-methyl-5-(diphosphooxymethyl)pyrimidine + 2 H(+) = thiamine phosphate + CO2 + diphosphate. The enzyme catalyses 2-(2-carboxy-4-methylthiazol-5-yl)ethyl phosphate + 4-amino-2-methyl-5-(diphosphooxymethyl)pyrimidine + 2 H(+) = thiamine phosphate + CO2 + diphosphate. It carries out the reaction 4-methyl-5-(2-phosphooxyethyl)-thiazole + 4-amino-2-methyl-5-(diphosphooxymethyl)pyrimidine + H(+) = thiamine phosphate + diphosphate. It participates in cofactor biosynthesis; thiamine diphosphate biosynthesis; thiamine phosphate from 4-amino-2-methyl-5-diphosphomethylpyrimidine and 4-methyl-5-(2-phosphoethyl)-thiazole: step 1/1. Its function is as follows. Condenses 4-methyl-5-(beta-hydroxyethyl)thiazole monophosphate (THZ-P) and 2-methyl-4-amino-5-hydroxymethyl pyrimidine pyrophosphate (HMP-PP) to form thiamine monophosphate (TMP). In Salmonella agona (strain SL483), this protein is Thiamine-phosphate synthase.